Consider the following 670-residue polypeptide: Methionine--tRNA ligase (670 aa).

A 'HIGH' region motif is present at residues 14–24 (PYANGHLHLGH). Zn(2+) contacts are provided by C145, C148, C158, and C161. The short motif at 330-334 (KMSKS) is the 'KMSKS' region element. Residue K333 participates in ATP binding. The tRNA-binding domain maps to 570–670 (DFAKVDLRIA…AGALPGMKVK (101 aa)).

The protein belongs to the class-I aminoacyl-tRNA synthetase family. MetG type 1 subfamily. As to quaternary structure, homodimer. It depends on Zn(2+) as a cofactor.

The protein localises to the cytoplasm. The enzyme catalyses tRNA(Met) + L-methionine + ATP = L-methionyl-tRNA(Met) + AMP + diphosphate. Its function is as follows. Is required not only for elongation of protein synthesis but also for the initiation of all mRNA translation through initiator tRNA(fMet) aminoacylation. In Legionella pneumophila subsp. pneumophila (strain Philadelphia 1 / ATCC 33152 / DSM 7513), this protein is Methionine--tRNA ligase.